The primary structure comprises 152 residues: Large ribosomal subunit protein uL22 (152 aa).

The segment covering 124 to 145 (APKKAAAKKAAPAKETTPAATE) has biased composition (low complexity). The interval 124 to 152 (APKKAAAKKAAPAKETTPAATESKTEGAE) is disordered.

The protein belongs to the universal ribosomal protein uL22 family. As to quaternary structure, part of the 50S ribosomal subunit.

This protein binds specifically to 23S rRNA; its binding is stimulated by other ribosomal proteins, e.g. L4, L17, and L20. It is important during the early stages of 50S assembly. It makes multiple contacts with different domains of the 23S rRNA in the assembled 50S subunit and ribosome. Functionally, the globular domain of the protein is located near the polypeptide exit tunnel on the outside of the subunit, while an extended beta-hairpin is found that lines the wall of the exit tunnel in the center of the 70S ribosome. The chain is Large ribosomal subunit protein uL22 from Salinispora tropica (strain ATCC BAA-916 / DSM 44818 / JCM 13857 / NBRC 105044 / CNB-440).